A 427-amino-acid chain; its full sequence is Serine hydroxymethyltransferase (427 aa).

Residues leucine 122 and 126 to 128 each bind (6S)-5,6,7,8-tetrahydrofolate; that span reads GHL. Lysine 231 carries the post-translational modification N6-(pyridoxal phosphate)lysine. (6S)-5,6,7,8-tetrahydrofolate is bound by residues glutamate 247 and 355–357; that span reads SPF.

The protein belongs to the SHMT family. In terms of assembly, homodimer. Requires pyridoxal 5'-phosphate as cofactor.

The protein resides in the cytoplasm. The enzyme catalyses (6R)-5,10-methylene-5,6,7,8-tetrahydrofolate + glycine + H2O = (6S)-5,6,7,8-tetrahydrofolate + L-serine. It participates in one-carbon metabolism; tetrahydrofolate interconversion. Its pathway is amino-acid biosynthesis; glycine biosynthesis; glycine from L-serine: step 1/1. Its function is as follows. Catalyzes the reversible interconversion of serine and glycine with tetrahydrofolate (THF) serving as the one-carbon carrier. This reaction serves as the major source of one-carbon groups required for the biosynthesis of purines, thymidylate, methionine, and other important biomolecules. Also exhibits THF-independent aldolase activity toward beta-hydroxyamino acids, producing glycine and aldehydes, via a retro-aldol mechanism. This Synechocystis sp. (strain ATCC 27184 / PCC 6803 / Kazusa) protein is Serine hydroxymethyltransferase.